A 46-amino-acid chain; its full sequence is Phospholipase A2 superbin c (46 aa).

The Ca(2+) site is built by Tyr28, Gly30, and Gly32. An intrachain disulfide couples Cys29 to Cys45.

Requires Ca(2+) as cofactor. Expressed by the venom gland.

The protein localises to the secreted. It catalyses the reaction a 1,2-diacyl-sn-glycero-3-phosphocholine + H2O = a 1-acyl-sn-glycero-3-phosphocholine + a fatty acid + H(+). Functionally, snake venom phospholipase A2 (PLA2) that inhibits collagen-induced platelet aggregation. In terms of inhibition of platelet aggregation, superbin c is more potent as superbin d. PLA2 catalyzes the calcium-dependent hydrolysis of the 2-acyl groups in 3-sn-phosphoglycerides. This is Phospholipase A2 superbin c from Austrelaps superbus (Lowland copperhead snake).